The following is a 175-amino-acid chain: Cytochrome c homolog (175 aa).

Over 1 to 8 (MSGKELNK) the chain is Cytoplasmic. The chain crosses the membrane as a helical; Signal-anchor span at residues 9–29 (IVAAILFASLIAMMVGFVANI). Topologically, residues 30–175 (LYKPTLELQH…LFLKTYVHDK (146 aa)) are periplasmic. Heme c is bound by residues cysteine 84, cysteine 87, histidine 88, and methionine 150.

This sequence belongs to the cytochrome c family. In terms of processing, binds 1 heme c group covalently per subunit.

It is found in the cell membrane. May be involved in electron transfer from bc1 complex to aa3. This Rickettsia felis (strain ATCC VR-1525 / URRWXCal2) (Rickettsia azadi) protein is Cytochrome c homolog (cycM).